The primary structure comprises 371 residues: Probable dual-specificity RNA methyltransferase RlmN (371 aa).

Glutamate 114 acts as the Proton acceptor in catalysis. The region spanning 120–346 is the Radical SAM core domain; the sequence is DGPRRSICVS…ESAGVNVNFR (227 aa). A disulfide bond links cysteine 127 and cysteine 357. [4Fe-4S] cluster-binding residues include cysteine 134, cysteine 138, and cysteine 141. S-adenosyl-L-methionine is bound by residues 183-184, serine 215, 238-240, and asparagine 314; these read GE and SLH. Cysteine 357 (S-methylcysteine intermediate) is an active-site residue.

The protein belongs to the radical SAM superfamily. RlmN family. [4Fe-4S] cluster is required as a cofactor.

It localises to the cytoplasm. The catalysed reaction is adenosine(2503) in 23S rRNA + 2 reduced [2Fe-2S]-[ferredoxin] + 2 S-adenosyl-L-methionine = 2-methyladenosine(2503) in 23S rRNA + 5'-deoxyadenosine + L-methionine + 2 oxidized [2Fe-2S]-[ferredoxin] + S-adenosyl-L-homocysteine. The enzyme catalyses adenosine(37) in tRNA + 2 reduced [2Fe-2S]-[ferredoxin] + 2 S-adenosyl-L-methionine = 2-methyladenosine(37) in tRNA + 5'-deoxyadenosine + L-methionine + 2 oxidized [2Fe-2S]-[ferredoxin] + S-adenosyl-L-homocysteine. In terms of biological role, specifically methylates position 2 of adenine 2503 in 23S rRNA and position 2 of adenine 37 in tRNAs. The polypeptide is Probable dual-specificity RNA methyltransferase RlmN (Rhodopirellula baltica (strain DSM 10527 / NCIMB 13988 / SH1)).